A 494-amino-acid polypeptide reads, in one-letter code: GTPase Der (494 aa).

2 EngA-type G domains span residues 3 to 166 (PVVA…VGEK) and 208 to 381 (IKLA…ECAT). Residues 9-16 (GRPNVGKS), 56-60 (DTGGI), 118-121 (NKTD), 214-221 (GRPNVGKS), 261-265 (DTAGV), and 326-329 (NKWD) contribute to the GTP site. A KH-like domain is found at 382-466 (RRVNTSMLTK…PIRIQFKEGE (85 aa)).

The protein belongs to the TRAFAC class TrmE-Era-EngA-EngB-Septin-like GTPase superfamily. EngA (Der) GTPase family. Associates with the 50S ribosomal subunit.

Functionally, GTPase that plays an essential role in the late steps of ribosome biogenesis. The polypeptide is GTPase Der (Serratia proteamaculans (strain 568)).